The sequence spans 561 residues: Arginine--tRNA ligase (561 aa).

The short motif at 136 to 146 (ANPTGLLHMGN) is the 'HIGH' region element.

It belongs to the class-I aminoacyl-tRNA synthetase family. In terms of assembly, monomer.

The protein localises to the cytoplasm. The enzyme catalyses tRNA(Arg) + L-arginine + ATP = L-arginyl-tRNA(Arg) + AMP + diphosphate. This is Arginine--tRNA ligase from Desulforamulus reducens (strain ATCC BAA-1160 / DSM 100696 / MI-1) (Desulfotomaculum reducens).